The chain runs to 643 residues: tRNA 5-methylaminomethyl-2-thiouridine biosynthesis bifunctional protein MnmC (643 aa).

Residues 1-223 (MPDRLVSATL…VDDRLVGDYA (223 aa)) are tRNA (mnm(5)s(2)U34)-methyltransferase. An FAD-dependent cmnm(5)s(2)U34 oxidoreductase region spans residues 247-643 (IGAGLAGCAV…LRARRVGSAG (397 aa)).

This sequence in the N-terminal section; belongs to the methyltransferase superfamily. tRNA (mnm(5)s(2)U34)-methyltransferase family. It in the C-terminal section; belongs to the DAO family. FAD serves as cofactor.

Its subcellular location is the cytoplasm. It catalyses the reaction 5-aminomethyl-2-thiouridine(34) in tRNA + S-adenosyl-L-methionine = 5-methylaminomethyl-2-thiouridine(34) in tRNA + S-adenosyl-L-homocysteine + H(+). Functionally, catalyzes the last two steps in the biosynthesis of 5-methylaminomethyl-2-thiouridine (mnm(5)s(2)U) at the wobble position (U34) in tRNA. Catalyzes the FAD-dependent demodification of cmnm(5)s(2)U34 to nm(5)s(2)U34, followed by the transfer of a methyl group from S-adenosyl-L-methionine to nm(5)s(2)U34, to form mnm(5)s(2)U34. The chain is tRNA 5-methylaminomethyl-2-thiouridine biosynthesis bifunctional protein MnmC from Burkholderia orbicola (strain MC0-3).